Here is a 449-residue protein sequence, read N- to C-terminus: Hyaluronidase (449 aa).

The first 23 residues, 1 to 23 (MYHIWIKFLAAWIFLKRFNGVHV), serve as a signal peptide directing secretion. Cystine bridges form between Cys-47–Cys-340 and Cys-211–Cys-227. 3 N-linked (GlcNAc...) asparagine glycosylation sites follow: Asn-67, Asn-103, and Asn-111. Residue Glu-135 is the Proton donor of the active site. N-linked (GlcNAc...) asparagine glycosylation is present at Asn-153. Residue Asn-357 is glycosylated (N-linked (GlcNAc...) asparagine). Intrachain disulfides connect Cys-365–Cys-376, Cys-370–Cys-427, and Cys-429–Cys-438. The N-linked (GlcNAc...) asparagine glycan is linked to Asn-401. In terms of domain architecture, EGF-like spans 427-438 (CQCYQGWKGLYC).

It belongs to the glycosyl hydrolase 56 family. Monomer. As to expression, expressed by the venom gland.

Its subcellular location is the secreted. The catalysed reaction is Random hydrolysis of (1-&gt;4)-linkages between N-acetyl-beta-D-glucosamine and D-glucuronate residues in hyaluronate.. Its function is as follows. Snake venom endo-hyaluronidase that degrades hyaluronan to smaller oligosaccharide fragments. In venom, it is not toxic by itself, but increases the diffusion of other venom proteins by degrading the extracellular matrix. In addition, it displays antiedematogenic activity. This chain is Hyaluronidase, found in Echis pyramidum leakeyi (Leakey's carpet viper).